A 143-amino-acid polypeptide reads, in one-letter code: MTLERTFSIVKPNAVAKNAIGAIYARFESAGLKIVAAKMVHLTREQAEGFYAEHRERPFFDGLVTFMTSGPIMVQVLEGNDAVRRNREIMGATNPESALAGTLRADYADSLTENAVHGSDSPASAEREIAYFFSADDICPRTR.

ATP-binding residues include Lys11, Phe59, Arg87, Thr93, Arg104, and Asn114. His117 (pros-phosphohistidine intermediate) is an active-site residue.

It belongs to the NDK family. Homotetramer. It depends on Mg(2+) as a cofactor.

It localises to the cytoplasm. The catalysed reaction is a 2'-deoxyribonucleoside 5'-diphosphate + ATP = a 2'-deoxyribonucleoside 5'-triphosphate + ADP. The enzyme catalyses a ribonucleoside 5'-diphosphate + ATP = a ribonucleoside 5'-triphosphate + ADP. Major role in the synthesis of nucleoside triphosphates other than ATP. The ATP gamma phosphate is transferred to the NDP beta phosphate via a ping-pong mechanism, using a phosphorylated active-site intermediate. This chain is Nucleoside diphosphate kinase, found in Edwardsiella ictaluri (strain 93-146).